Consider the following 452-residue polypeptide: MSPNSTLWQTILQDLEKLYNEETYNELFLPVTSTFKDQNGLLTMVVANEFLKNRINKLYIAKINELATKYSSTPVRLKFVSQEEVIEEPVADRKLTIDYRQGNLNSTYTFDSFVVGKSNMFAFRMAMKVADQPGAVANPFYIFGDVGLGKTHLMQAIGNYILDNDVEKRILYVKADNFIEDFVSLLSRNKNKTEEFNAKYKDIDVILVDDIQIMANASKTQMEFFKLFDYLYLNNKQIVITSDKPASQLTNIMPRLTTRFEAGLSVDIQIPELEHRISILKRKTATLDANLEVSEDILTFIASQFAANIREMEGALIRLISYAQTFNLEITMNVVEEALGAVLKTKKKTNDLNENNYDKIQSIVADYFQVSLPDLIGKKRHAKFTLPRHIAMYLIKLKYNIPYKTIGSLFNDRDHSTVLSACEKVERDMRMDSNLKFAVDSIVKKIDSPLLK.

The interval 1-73 (MSPNSTLWQT…NELATKYSST (73 aa)) is domain I, interacts with DnaA modulators. The tract at residues 73 to 102 (TPVRLKFVSQEEVIEEPVADRKLTIDYRQG) is domain II. A domain III, AAA+ region region spans residues 103 to 323 (NLNSTYTFDS…GALIRLISYA (221 aa)). Positions 147, 149, 150, and 151 each coordinate ATP. The interval 324–452 (QTFNLEITMN…VKKIDSPLLK (129 aa)) is domain IV, binds dsDNA.

The protein belongs to the DnaA family. In terms of assembly, oligomerizes as a right-handed, spiral filament on DNA at oriC.

The protein localises to the cytoplasm. Its function is as follows. Plays an essential role in the initiation and regulation of chromosomal replication. ATP-DnaA binds to the origin of replication (oriC) to initiate formation of the DNA replication initiation complex once per cell cycle. Binds the DnaA box (a 9 base pair repeat at the origin) and separates the double-stranded (ds)DNA. Forms a right-handed helical filament on oriC DNA; dsDNA binds to the exterior of the filament while single-stranded (ss)DNA is stabiized in the filament's interior. The ATP-DnaA-oriC complex binds and stabilizes one strand of the AT-rich DNA unwinding element (DUE), permitting loading of DNA polymerase. After initiation quickly degrades to an ADP-DnaA complex that is not apt for DNA replication. Binds acidic phospholipids. The protein is Chromosomal replication initiator protein DnaA of Acholeplasma laidlawii (strain PG-8A).